A 177-amino-acid polypeptide reads, in one-letter code: Nucleoside triphosphate/diphosphate phosphatase (177 aa).

The Proton donor role is filled by R23. Mg(2+) is bound by residues N87, D103, D105, D107, D120, and E123.

This sequence belongs to the Ntdp family. Requires Mg(2+) as cofactor.

It carries out the reaction a ribonucleoside 5'-triphosphate + H2O = a ribonucleoside 5'-diphosphate + phosphate + H(+). The enzyme catalyses a ribonucleoside 5'-diphosphate + H2O = a ribonucleoside 5'-phosphate + phosphate + H(+). Its function is as follows. Has nucleoside phosphatase activity towards nucleoside triphosphates and nucleoside diphosphates. This Streptococcus pneumoniae serotype 2 (strain D39 / NCTC 7466) protein is Nucleoside triphosphate/diphosphate phosphatase.